Reading from the N-terminus, the 320-residue chain is Ferrochelatase (320 aa).

Fe cation-binding residues include His194 and Glu275.

This sequence belongs to the ferrochelatase family.

The protein resides in the cytoplasm. The catalysed reaction is heme b + 2 H(+) = protoporphyrin IX + Fe(2+). The protein operates within porphyrin-containing compound metabolism; protoheme biosynthesis; protoheme from protoporphyrin-IX: step 1/1. Its function is as follows. Catalyzes the ferrous insertion into protoporphyrin IX. The chain is Ferrochelatase from Xylella fastidiosa (strain 9a5c).